Here is a 365-residue protein sequence, read N- to C-terminus: tRNA-specific 2-thiouridylase MnmA (365 aa).

ATP-binding positions include 14–21 and L40; that span reads AMSGGVDS. C108 acts as the Nucleophile in catalysis. The cysteines at positions 108 and 204 are disulfide-linked. Residue G132 participates in ATP binding. Positions 154 to 156 are interaction with tRNA; sequence KDQ. C204 (cysteine persulfide intermediate) is an active-site residue.

This sequence belongs to the MnmA/TRMU family.

It localises to the cytoplasm. It carries out the reaction S-sulfanyl-L-cysteinyl-[protein] + uridine(34) in tRNA + AH2 + ATP = 2-thiouridine(34) in tRNA + L-cysteinyl-[protein] + A + AMP + diphosphate + H(+). Catalyzes the 2-thiolation of uridine at the wobble position (U34) of tRNA, leading to the formation of s(2)U34. This Rickettsia africae (strain ESF-5) protein is tRNA-specific 2-thiouridylase MnmA.